The following is a 182-amino-acid chain: Shikimate kinase (182 aa).

14–19 provides a ligand contact to ATP; sequence GAGKTT. T18 lines the Mg(2+) pocket. D36, R60, and G84 together coordinate substrate. Residue R122 participates in ATP binding. Residue R141 participates in substrate binding.

Belongs to the shikimate kinase family. In terms of assembly, monomer. It depends on Mg(2+) as a cofactor.

The protein resides in the cytoplasm. The catalysed reaction is shikimate + ATP = 3-phosphoshikimate + ADP + H(+). Its pathway is metabolic intermediate biosynthesis; chorismate biosynthesis; chorismate from D-erythrose 4-phosphate and phosphoenolpyruvate: step 5/7. Functionally, catalyzes the specific phosphorylation of the 3-hydroxyl group of shikimic acid using ATP as a cosubstrate. This is Shikimate kinase from Marinomonas sp. (strain MWYL1).